A 429-amino-acid chain; its full sequence is Glutamate-1-semialdehyde 2,1-aminomutase (429 aa).

Lys265 carries the post-translational modification N6-(pyridoxal phosphate)lysine.

Belongs to the class-III pyridoxal-phosphate-dependent aminotransferase family. HemL subfamily. As to quaternary structure, homodimer. Requires pyridoxal 5'-phosphate as cofactor.

The protein resides in the cytoplasm. It carries out the reaction (S)-4-amino-5-oxopentanoate = 5-aminolevulinate. Its pathway is porphyrin-containing compound metabolism; protoporphyrin-IX biosynthesis; 5-aminolevulinate from L-glutamyl-tRNA(Glu): step 2/2. This is Glutamate-1-semialdehyde 2,1-aminomutase from Legionella pneumophila (strain Lens).